The primary structure comprises 470 residues: UDP-N-acetylmuramoylalanine--D-glutamate ligase (470 aa).

Glycine 124 to threonine 130 lines the ATP pocket.

Belongs to the MurCDEF family.

The protein resides in the cytoplasm. The catalysed reaction is UDP-N-acetyl-alpha-D-muramoyl-L-alanine + D-glutamate + ATP = UDP-N-acetyl-alpha-D-muramoyl-L-alanyl-D-glutamate + ADP + phosphate + H(+). It functions in the pathway cell wall biogenesis; peptidoglycan biosynthesis. Cell wall formation. Catalyzes the addition of glutamate to the nucleotide precursor UDP-N-acetylmuramoyl-L-alanine (UMA). The sequence is that of UDP-N-acetylmuramoylalanine--D-glutamate ligase from Prochlorococcus marinus (strain SARG / CCMP1375 / SS120).